Here is a 329-residue protein sequence, read N- to C-terminus: Phenylalanine--tRNA ligase alpha subunit (329 aa).

Glu-254 is a binding site for Mg(2+).

It belongs to the class-II aminoacyl-tRNA synthetase family. Phe-tRNA synthetase alpha subunit type 1 subfamily. As to quaternary structure, tetramer of two alpha and two beta subunits. The cofactor is Mg(2+).

The protein localises to the cytoplasm. It catalyses the reaction tRNA(Phe) + L-phenylalanine + ATP = L-phenylalanyl-tRNA(Phe) + AMP + diphosphate + H(+). This is Phenylalanine--tRNA ligase alpha subunit from Haemophilus influenzae (strain PittEE).